A 2226-amino-acid polypeptide reads, in one-letter code: DNA polymerase epsilon catalytic subunit A (2226 aa).

Positions 1240 to 1265 (RVSKVTSRKRRNGKANNVSDSEEEER) are disordered. Zn(2+) is bound by residues Cys-2112, Cys-2115, Cys-2134, and Cys-2137. Residues 2112–2137 (CDYCNYIRDIDFCRDEQKNIWNCSNC) form a CysA-type zinc finger. Residues Cys-2168, Cys-2171, Cys-2183, and Cys-2185 each contribute to the [4Fe-4S] cluster site. Residues 2168 to 2185 (CSKCHQIKSDNMSEYCKC) carry the CysB motif motif.

Belongs to the DNA polymerase type-B family. In terms of assembly, heterotetramer. Consists of 4 subunits: POL2, DPB2, DPB3 and DPB4. [4Fe-4S] cluster serves as cofactor.

The protein resides in the nucleus. It carries out the reaction DNA(n) + a 2'-deoxyribonucleoside 5'-triphosphate = DNA(n+1) + diphosphate. DNA polymerase II participates in chromosomal DNA replication. The chain is DNA polymerase epsilon catalytic subunit A (POL2) from Debaryomyces hansenii (strain ATCC 36239 / CBS 767 / BCRC 21394 / JCM 1990 / NBRC 0083 / IGC 2968) (Yeast).